We begin with the raw amino-acid sequence, 536 residues long: Pre-mRNA-splicing regulator female-lethal(2)D (536 aa).

The segment at 1–91 (MSVAAMTMDD…LQQQQQQQQQ (91 aa)) is disordered. Positions 28 to 39 (QNLNILNSSQNS) are enriched in low complexity. The segment covering 57 to 69 (HHHHHPHPHHHHH) has biased composition (basic residues). Over residues 72 to 91 (QQQQQQQQQHLQQQQQQQQQ) the composition is skewed to low complexity. Residues 254–319 (KSFSEEVKKS…KQAIKDEVVA (66 aa)) are a coiled coil. A disordered region spans residues 424 to 450 (APRTLPPKKSKLRGITTRRNSQLEEDH).

This sequence belongs to the fl(2)d family. As to quaternary structure, component of the WMM complex, a N6-methyltransferase complex composed of a catalytic subcomplex, named MAC, and of an associated subcomplex, named MACOM. The MAC subcomplex is composed of Ime4/Mettl3 and Mettl14. The MACOM subcomplex is composed of fl(2)d, Flacc/Xio, Hakai, vir, and, in some cases of nito. Interacts with vir and msk. Part of a complex containing fl(2)d, Sxl and vir.

It is found in the nucleus. In terms of biological role, associated component of the WMM complex, a complex that mediates N6-methyladenosine (m6A) methylation of mRNAs, a modification that plays a role in the efficiency of mRNA splicing and is required for sex determination. Required for sex determination and dosage compensation via Sxl alternative splicing: m6A methylation acts as a key regulator of Sxl pre-mRNA and promotes female-specific alternative splicing of Sxl, which determines female physiognomy. M6A methylation is also required for neuronal functions. Required for proper inclusion of regulated exons in Ubx transcripts, leading to isoforms Ia/b and IIa/b. In Drosophila melanogaster (Fruit fly), this protein is Pre-mRNA-splicing regulator female-lethal(2)D.